A 177-amino-acid chain; its full sequence is uncharacterized protein (177 aa).

Residues 1 to 27 form a disordered region; sequence MSHSRRAAPTQDQCHTPGFPTSRETSG.

This is an uncharacterized protein from Homo sapiens (Human).